A 442-amino-acid chain; its full sequence is Putative helicase 161L (442 aa).

A Helicase ATP-binding domain is found at I88–K241. Position 101-108 (C101–T108) interacts with ATP. A DEAH box motif is present at residues D194–H197.

It belongs to the DEAD box helicase family. DEAH subfamily.

In Invertebrate iridescent virus 6 (IIV-6), this protein is Putative helicase 161L.